Reading from the N-terminus, the 194-residue chain is Imidazoleglycerol-phosphate dehydratase (194 aa).

It belongs to the imidazoleglycerol-phosphate dehydratase family.

It is found in the cytoplasm. It carries out the reaction D-erythro-1-(imidazol-4-yl)glycerol 3-phosphate = 3-(imidazol-4-yl)-2-oxopropyl phosphate + H2O. It participates in amino-acid biosynthesis; L-histidine biosynthesis; L-histidine from 5-phospho-alpha-D-ribose 1-diphosphate: step 6/9. The sequence is that of Imidazoleglycerol-phosphate dehydratase from Bacillus thuringiensis (strain Al Hakam).